The following is a 754-amino-acid chain: MIVFLVFKHLFSLRLITMFFLLHFIVLINVKDFALTQGSMITPSCQKGYFPCGNLTKCLPRAFHCDGKDDCGNGADEENCGDTSGWATIFGTVHGNANSVALTQECFLKQYPQCCDCKETELECVNGDLKSVPMISNNVTLLSLKKNKIHSLPDKVFIKYTKLKKIFLQHNCIRHISRKAFFGLCNLQILYLNHNCITTLRPGIFKDLHQLTWLILDDNPITRISQRLFTGLNSLFFLSMVNNYLEALPKQMCAQMPQLNWVDLEGNRIKYLTNSTFLSCDSLTVLFLPRNQIGFVPEKTFSSLKNLGELDLSSNTITELSPHLFKDLKLLQKLNLSSNPLMYLHKNQFESLKQLQSLDLERIEIPNINTRMFQPMKNLSHIYFKNFRYCSYAPHVRICMPLTDGISSFEDLLANNILRIFVWVIAFITCFGNLFVIGMRSFIKAENTTHAMSIKILCCADCLMGVYLFFVGIFDIKYRGQYQKYALLWMESVQCRLMGFLAMLSTEVSVLLLTYLTLEKFLVIVFPFSNIRPGKRQTSVILICIWMAGFLIAVIPFWNKDYFGNFYGKNGVCFPLYYDQTEDIGSKGYSLGIFLGVNLLAFLIIVFSYITMFCSIQKTALQTTEVRNCFGREVAVANRFFFIVFSDAICWIPVFVVKILSLFRVEIPDTMTSWIVIFFLPVNSALNPILYTLTTNFFKDKLKQLLHKHQRKSIFKIKKKSLSTSIVWIEDSSSLKLGVLNKITLGDSIMKPVS.

Over 1–416 (MIVFLVFKHL…SSFEDLLANN (416 aa)) the chain is Extracellular. Positions 44 to 81 (SCQKGYFPCGNLTKCLPRAFHCDGKDDCGNGADEENCG) constitute an LDL-receptor class A domain. Disulfide bonds link C45–C58, C52–C71, and C65–C80. An N-linked (GlcNAc...) asparagine glycan is attached at N54. N138 carries an N-linked (GlcNAc...) asparagine glycan. LRR repeat units follow at residues 138–159 (NVTL…VFIK), 162–183 (KLKK…AFFG), 186–207 (NLQI…IFKD), 210–231 (QLTW…LFTG), 234–255 (SLFF…MCAQ), 258–279 (QLNW…TFLS), 282–303 (SLTV…TFSS), 306–327 (NLGE…LFKD), 330–351 (LLQK…QFES), and 354–375 (QLQS…MFQP). N-linked (GlcNAc...) asparagine glycosylation is present at N274. An N-linked (GlcNAc...) asparagine glycan is attached at N335. The N-linked (GlcNAc...) asparagine glycan is linked to N378. A helical transmembrane segment spans residues 417 to 437 (ILRIFVWVIAFITCFGNLFVI). Topologically, residues 438–455 (GMRSFIKAENTTHAMSIK) are cytoplasmic. Residues 456–476 (ILCCADCLMGVYLFFVGIFDI) traverse the membrane as a helical segment. At 477-495 (KYRGQYQKYALLWMESVQC) the chain is on the extracellular side. C495 and C573 are joined by a disulfide. The helical transmembrane segment at 496 to 518 (RLMGFLAMLSTEVSVLLLTYLTL) threads the bilayer. Residues 519-537 (EKFLVIVFPFSNIRPGKRQ) are Cytoplasmic-facing. A helical transmembrane segment spans residues 538 to 558 (TSVILICIWMAGFLIAVIPFW). Over 559–592 (NKDYFGNFYGKNGVCFPLYYDQTEDIGSKGYSLG) the chain is Extracellular. The helical transmembrane segment at 593-613 (IFLGVNLLAFLIIVFSYITMF) threads the bilayer. Residues 614–639 (CSIQKTALQTTEVRNCFGREVAVANR) lie on the Cytoplasmic side of the membrane. A helical membrane pass occupies residues 640 to 660 (FFFIVFSDAICWIPVFVVKIL). The Extracellular segment spans residues 661 to 670 (SLFRVEIPDT). Residues 671–691 (MTSWIVIFFLPVNSALNPILY) traverse the membrane as a helical segment. Residues 692-754 (TLTTNFFKDK…LGDSIMKPVS (63 aa)) are Cytoplasmic-facing.

This sequence belongs to the G-protein coupled receptor 1 family. In terms of tissue distribution, expressed mainly in the brain, kidney, muscle, testis, thyroid, uterus, peripheral blood cells and bone marrow.

It localises to the cell membrane. In terms of biological role, receptor for relaxin. The activity of this receptor is mediated by G proteins leading to stimulation of adenylate cyclase and an increase of cAMP. May also be a receptor for Leydig insulin-like peptide (INSL3). The protein is Relaxin receptor 2 (RXFP2) of Homo sapiens (Human).